Consider the following 434-residue polypeptide: Lipoyl synthase, mitochondrial (434 aa).

Residues 1–31 constitute a mitochondrion transit peptide; the sequence is MAASARGLRTLQSAHSSTTVPRLQLAVSRCY. A compositionally biased stretch (low complexity) spans 34–54; that stretch reads TTSPDPPITNSSNSSNSTPTP. A disordered region spans residues 34–55; sequence TTSPDPPITNSSNSSNSTPTPK. 7 residues coordinate [4Fe-4S] cluster: cysteine 144, cysteine 149, cysteine 155, cysteine 175, cysteine 179, cysteine 182, and serine 390. The Radical SAM core domain occupies 158–379; sequence GSSKSAATAT…KERALEMGFL (222 aa).

It belongs to the radical SAM superfamily. Lipoyl synthase family. [4Fe-4S] cluster serves as cofactor.

It localises to the mitochondrion. The catalysed reaction is [[Fe-S] cluster scaffold protein carrying a second [4Fe-4S](2+) cluster] + N(6)-octanoyl-L-lysyl-[protein] + 2 oxidized [2Fe-2S]-[ferredoxin] + 2 S-adenosyl-L-methionine + 4 H(+) = [[Fe-S] cluster scaffold protein] + N(6)-[(R)-dihydrolipoyl]-L-lysyl-[protein] + 4 Fe(3+) + 2 hydrogen sulfide + 2 5'-deoxyadenosine + 2 L-methionine + 2 reduced [2Fe-2S]-[ferredoxin]. The protein operates within protein modification; protein lipoylation via endogenous pathway; protein N(6)-(lipoyl)lysine from octanoyl-[acyl-carrier-protein]: step 2/2. Catalyzes the radical-mediated insertion of two sulfur atoms into the C-6 and C-8 positions of the octanoyl moiety bound to the lipoyl domains of lipoate-dependent enzymes, thereby converting the octanoylated domains into lipoylated derivatives. The protein is Lipoyl synthase, mitochondrial of Paracoccidioides brasiliensis (strain Pb03).